The following is an 88-amino-acid chain: U13-theraphotoxin-Cg1a (88 aa).

Positions Met-1–Ala-21 are cleaved as a signal peptide. A propeptide spanning residues Ala-22 to Arg-52 is cleaved from the precursor. Disulfide bonds link Cys-54-Cys-68, Cys-61-Cys-73, and Cys-67-Cys-80.

The protein belongs to the neurotoxin 10 (Hwtx-1) family. 41 (Jztx-36) subfamily. As to expression, expressed by the venom gland.

Its subcellular location is the secreted. In terms of biological role, probable ion channel inhibitor. This Chilobrachys guangxiensis (Chinese earth tiger tarantula) protein is U13-theraphotoxin-Cg1a.